The sequence spans 1379 residues: DNA-directed RNA polymerase subunit beta (1379 aa).

Belongs to the RNA polymerase beta chain family. In terms of assembly, the RNAP catalytic core consists of 2 alpha, 1 beta, 1 beta' and 1 omega subunit. When a sigma factor is associated with the core the holoenzyme is formed, which can initiate transcription.

It catalyses the reaction RNA(n) + a ribonucleoside 5'-triphosphate = RNA(n+1) + diphosphate. Its function is as follows. DNA-dependent RNA polymerase catalyzes the transcription of DNA into RNA using the four ribonucleoside triphosphates as substrates. The chain is DNA-directed RNA polymerase subunit beta from Chelativorans sp. (strain BNC1).